The following is a 629-amino-acid chain: Transmembrane 9 superfamily protein C1105.08 (629 aa).

The signal sequence occupies residues M1–S26. Residues F27–W266 are Lumenal-facing. N-linked (GlcNAc...) asparagine glycosylation occurs at N157. The chain crosses the membrane as a helical span at residues I267–L287. The Cytoplasmic segment spans residues Y288–T337. The helical transmembrane segment at G338–A358 threads the bilayer. Residues P359–S364 are Lumenal-facing. A helical transmembrane segment spans residues L365 to A385. Residues L386–L401 lie on the Cytoplasmic side of the membrane. A helical transmembrane segment spans residues L402–F422. Over W423–W436 the chain is Lumenal. The chain crosses the membrane as a helical span at residues L437 to I457. Topologically, residues G458–P488 are cytoplasmic. The chain crosses the membrane as a helical span at residues S489–L509. The Lumenal portion of the chain corresponds to D510–F519. Residues M520 to Y544 traverse the membrane as a helical segment. Topologically, residues F545–S558 are cytoplasmic. The helical transmembrane segment at F559 to F579 threads the bilayer. Topologically, residues K580 to L598 are lumenal. Residues I599–V619 traverse the membrane as a helical segment. Topologically, residues N620–D629 are cytoplasmic.

Belongs to the nonaspanin (TM9SF) (TC 9.A.2) family.

Its subcellular location is the golgi apparatus membrane. It is found in the vacuole membrane. This is Transmembrane 9 superfamily protein C1105.08 from Schizosaccharomyces pombe (strain 972 / ATCC 24843) (Fission yeast).